The primary structure comprises 266 residues: Mitochondrial import inner membrane translocase subunit Tim29 (266 aa).

Residues 1–37 (MVTAALKRFWSGGHGEAGGEAGGATTVAVKPGLWTRL) constitute a mitochondrion transit peptide. Topologically, residues 38–65 (STWAGALLRDYAEACGDAAAAARARPGR) are mitochondrial matrix. The helical transmembrane segment at 66-83 (AALYVGLLGGAAACCALA) threads the bilayer. Residues 84–266 (PSEAAFEEAL…DSLVQSDVSR (183 aa)) lie on the Mitochondrial intermembrane side of the membrane.

Component of the TIM22 complex, which core is composed of TIMM22, associated with TIMM10 (TIMM10A and/or TIMM10B), TIMM9, AGK and TIMM29. Interacts with TIMM10B; the interaction is direct. Interacts with TOMM40; linking the TIM22 complex to the TOM complex. Interacts with TIMM22 (when oxidized); the interaction is direct.

It localises to the mitochondrion inner membrane. Functionally, component of the TIM22 complex, a complex that mediates the import and insertion of multi-pass transmembrane proteins into the mitochondrial inner membrane. The TIM22 complex forms a twin-pore translocase that uses the membrane potential as the external driving force. Required for the stability of the TIM22 complex and functions in the assembly of the TIMM22 protein into the TIM22 complex. May facilitate cooperation between TIM22 and TOM complexes by interacting with TOMM40. The sequence is that of Mitochondrial import inner membrane translocase subunit Tim29 (Timm29) from Mus musculus (Mouse).